A 387-amino-acid chain; its full sequence is 3-ketoacyl-CoA thiolase (387 aa).

The Acyl-thioester intermediate role is filled by Cys-91. Active-site proton acceptor residues include His-343 and Cys-373.

The protein belongs to the thiolase-like superfamily. Thiolase family. As to quaternary structure, heterotetramer of two alpha chains (FadB) and two beta chains (FadA).

The protein localises to the cytoplasm. It catalyses the reaction an acyl-CoA + acetyl-CoA = a 3-oxoacyl-CoA + CoA. The protein operates within lipid metabolism; fatty acid beta-oxidation. Functionally, catalyzes the final step of fatty acid oxidation in which acetyl-CoA is released and the CoA ester of a fatty acid two carbons shorter is formed. This chain is 3-ketoacyl-CoA thiolase, found in Serratia proteamaculans (strain 568).